The chain runs to 312 residues: DNA-directed RNA polymerase subunit alpha (312 aa).

Positions 1 to 226 (MIEFEKPNIT…EHFKVFESAD (226 aa)) are alpha N-terminal domain (alpha-NTD). An alpha C-terminal domain (alpha-CTD) region spans residues 243–312 (KEKKLEMTIE…DLGLSLRQED (70 aa)).

It belongs to the RNA polymerase alpha chain family. In terms of assembly, homodimer. The RNAP catalytic core consists of 2 alpha, 1 beta, 1 beta' and 1 omega subunit. When a sigma factor is associated with the core the holoenzyme is formed, which can initiate transcription.

The catalysed reaction is RNA(n) + a ribonucleoside 5'-triphosphate = RNA(n+1) + diphosphate. In terms of biological role, DNA-dependent RNA polymerase catalyzes the transcription of DNA into RNA using the four ribonucleoside triphosphates as substrates. This chain is DNA-directed RNA polymerase subunit alpha, found in Lactobacillus acidophilus (strain ATCC 700396 / NCK56 / N2 / NCFM).